Reading from the N-terminus, the 261-residue chain is Small ribosomal subunit protein uS2 (261 aa).

The protein belongs to the universal ribosomal protein uS2 family.

This Enterococcus faecalis (strain ATCC 700802 / V583) protein is Small ribosomal subunit protein uS2.